Reading from the N-terminus, the 220-residue chain is Orotate phosphoribosyltransferase (220 aa).

Lysine 26 provides a ligand contact to 5-phospho-alpha-D-ribose 1-diphosphate. 34–35 contacts orotate; it reads FF. 5-phospho-alpha-D-ribose 1-diphosphate contacts are provided by residues 72 to 73, arginine 99, lysine 100, lysine 103, histidine 105, and 125 to 133; these read YK and DDVISAGTS. The orotate site is built by serine 129 and arginine 157.

This sequence belongs to the purine/pyrimidine phosphoribosyltransferase family. PyrE subfamily. As to quaternary structure, homodimer. It depends on Mg(2+) as a cofactor.

The catalysed reaction is orotidine 5'-phosphate + diphosphate = orotate + 5-phospho-alpha-D-ribose 1-diphosphate. It functions in the pathway pyrimidine metabolism; UMP biosynthesis via de novo pathway; UMP from orotate: step 1/2. In terms of biological role, catalyzes the transfer of a ribosyl phosphate group from 5-phosphoribose 1-diphosphate to orotate, leading to the formation of orotidine monophosphate (OMP). The polypeptide is Orotate phosphoribosyltransferase (Nitrosococcus oceani (strain ATCC 19707 / BCRC 17464 / JCM 30415 / NCIMB 11848 / C-107)).